Here is a 457-residue protein sequence, read N- to C-terminus: Putative movement protein (457 aa).

Disordered regions lie at residues 265 to 284 (SGSR…LERS), 293 to 312 (FRSQ…SDFE), and 345 to 457 (ARQD…PPSV). Positions 411–426 (RAGGGEIHGGSEGGGV) are enriched in gly residues. The segment covering 448–457 (YKQHDLPPSV) has biased composition (basic and acidic residues).

The protein belongs to the tobamoviruses movement protein family.

In terms of biological role, suppressor of viral-induced RNA silencing. The protein is Putative movement protein of Crataegus (hawthorn).